The primary structure comprises 852 residues: Nucleolar protein 14 homolog (852 aa).

Positions Met1 to Asp40 are disordered. Polar residues predominate over residues Arg20–Arg35. Residues Ile190–Asn221 adopt a coiled-coil conformation. Disordered stretches follow at residues Arg288 to Asp324 and Leu338 to Asp410. Residues Gly344–Asp353 are compositionally biased toward basic and acidic residues. The span at Glu354 to Asn381 shows a compositional bias: acidic residues. A coiled-coil region spans residues Lys774–Lys851.

It belongs to the NOP14 family. As to quaternary structure, component of the ribosomal small subunit (SSU) processome.

It localises to the nucleus. The protein resides in the nucleolus. Functionally, involved in nucleolar processing of pre-18S ribosomal RNA. Has a role in the nuclear export of 40S pre-ribosomal subunit to the cytoplasm. This chain is Nucleolar protein 14 homolog (l(3)07882), found in Drosophila melanogaster (Fruit fly).